A 312-amino-acid polypeptide reads, in one-letter code: DNA-directed RNA polymerase subunit alpha (312 aa).

An alpha N-terminal domain (alpha-NTD) region spans residues 1–226; that stretch reads MIEFKKPNIT…EHFKAFESAD (226 aa). Residues 243-312 form an alpha C-terminal domain (alpha-CTD) region; it reads KEKKLEMTIE…DLGLSLRQED (70 aa).

It belongs to the RNA polymerase alpha chain family. In terms of assembly, homodimer. The RNAP catalytic core consists of 2 alpha, 1 beta, 1 beta' and 1 omega subunit. When a sigma factor is associated with the core the holoenzyme is formed, which can initiate transcription.

It catalyses the reaction RNA(n) + a ribonucleoside 5'-triphosphate = RNA(n+1) + diphosphate. In terms of biological role, DNA-dependent RNA polymerase catalyzes the transcription of DNA into RNA using the four ribonucleoside triphosphates as substrates. This is DNA-directed RNA polymerase subunit alpha from Lactobacillus delbrueckii subsp. bulgaricus (strain ATCC BAA-365 / Lb-18).